The primary structure comprises 98 residues: NADH-ubiquinone oxidoreductase chain 4L (98 aa).

Transmembrane regions (helical) follow at residues 1 to 21, 28 to 48, and 59 to 79; these read MTSISLNLIMAFSLALAGVLI, STLLCLEGMMLSLFILMALLI, and APLILLVFSACEAGVGLALLV.

The protein belongs to the complex I subunit 4L family. Core subunit of respiratory chain NADH dehydrogenase (Complex I) which is composed of 45 different subunits.

The protein localises to the mitochondrion inner membrane. It catalyses the reaction a ubiquinone + NADH + 5 H(+)(in) = a ubiquinol + NAD(+) + 4 H(+)(out). Its function is as follows. Core subunit of the mitochondrial membrane respiratory chain NADH dehydrogenase (Complex I) which catalyzes electron transfer from NADH through the respiratory chain, using ubiquinone as an electron acceptor. Part of the enzyme membrane arm which is embedded in the lipid bilayer and involved in proton translocation. In Vombatus ursinus (Common wombat), this protein is NADH-ubiquinone oxidoreductase chain 4L (MT-ND4L).